Reading from the N-terminus, the 283-residue chain is Pantothenate synthetase (283 aa).

An ATP-binding site is contributed by 26-33 (MGNLHEGH). The active-site Proton donor is the histidine 33. Glutamine 57 contacts (R)-pantoate. Glutamine 57 is a beta-alanine binding site. Residue 144–147 (GKKD) participates in ATP binding. Residue glutamine 150 coordinates (R)-pantoate. ATP contacts are provided by residues valine 173 and 181–184 (LSSR).

Belongs to the pantothenate synthetase family. In terms of assembly, homodimer.

Its subcellular location is the cytoplasm. The catalysed reaction is (R)-pantoate + beta-alanine + ATP = (R)-pantothenate + AMP + diphosphate + H(+). It participates in cofactor biosynthesis; (R)-pantothenate biosynthesis; (R)-pantothenate from (R)-pantoate and beta-alanine: step 1/1. Functionally, catalyzes the condensation of pantoate with beta-alanine in an ATP-dependent reaction via a pantoyl-adenylate intermediate. The chain is Pantothenate synthetase from Ralstonia pickettii (strain 12J).